The chain runs to 848 residues: Adenylate cyclase (848 aa).

Positions 1 to 535 (MYLYIETLKQ…DVSHHFPLRL (535 aa)) are catalytic. Residues 541–848 (KALYSPCEIR…DTPLLQQYFS (308 aa)) are regulatory. The residue at position 609 (histidine 609) is a Phosphohistidine; by CRR.

It belongs to the adenylyl cyclase class-1 family.

The protein localises to the cytoplasm. It carries out the reaction ATP = 3',5'-cyclic AMP + diphosphate. The regulatory domain is involved in the regulation of cyclase activity by the carbon source. Activated by the PTS system, glucose-specific IIA component (CRR). In terms of biological role, catalyzes the formation of the second messenger cAMP from ATP. Its transcript is probably degraded by endoribonuclease LS (rnlA), decreasing cAMP levels and the negative regulator Crp-cAMP, which then induces its own transcription again. The sequence is that of Adenylate cyclase (cyaA) from Escherichia coli (strain K12).